The sequence spans 293 residues: 4-hydroxy-tetrahydrodipicolinate synthase (293 aa).

Thr-47 provides a ligand contact to pyruvate. Tyr-135 serves as the catalytic Proton donor/acceptor. The Schiff-base intermediate with substrate role is filled by Lys-163. Val-205 serves as a coordination point for pyruvate.

It belongs to the DapA family. In terms of assembly, homotetramer; dimer of dimers.

It is found in the cytoplasm. The catalysed reaction is L-aspartate 4-semialdehyde + pyruvate = (2S,4S)-4-hydroxy-2,3,4,5-tetrahydrodipicolinate + H2O + H(+). It functions in the pathway amino-acid biosynthesis; L-lysine biosynthesis via DAP pathway; (S)-tetrahydrodipicolinate from L-aspartate: step 3/4. Its function is as follows. Catalyzes the condensation of (S)-aspartate-beta-semialdehyde [(S)-ASA] and pyruvate to 4-hydroxy-tetrahydrodipicolinate (HTPA). This Leptothrix cholodnii (strain ATCC 51168 / LMG 8142 / SP-6) (Leptothrix discophora (strain SP-6)) protein is 4-hydroxy-tetrahydrodipicolinate synthase.